The sequence spans 170 residues: Adenine phosphoribosyltransferase (170 aa).

Belongs to the purine/pyrimidine phosphoribosyltransferase family. In terms of assembly, homodimer.

The protein resides in the cytoplasm. It catalyses the reaction AMP + diphosphate = 5-phospho-alpha-D-ribose 1-diphosphate + adenine. The protein operates within purine metabolism; AMP biosynthesis via salvage pathway; AMP from adenine: step 1/1. Catalyzes a salvage reaction resulting in the formation of AMP, that is energically less costly than de novo synthesis. The protein is Adenine phosphoribosyltransferase of Oceanobacillus iheyensis (strain DSM 14371 / CIP 107618 / JCM 11309 / KCTC 3954 / HTE831).